Here is a 178-residue protein sequence, read N- to C-terminus: Adenine phosphoribosyltransferase (178 aa).

Belongs to the purine/pyrimidine phosphoribosyltransferase family. In terms of assembly, homodimer.

The protein localises to the cytoplasm. It carries out the reaction AMP + diphosphate = 5-phospho-alpha-D-ribose 1-diphosphate + adenine. It participates in purine metabolism; AMP biosynthesis via salvage pathway; AMP from adenine: step 1/1. Catalyzes a salvage reaction resulting in the formation of AMP, that is energically less costly than de novo synthesis. This chain is Adenine phosphoribosyltransferase, found in Bacteroides fragilis (strain ATCC 25285 / DSM 2151 / CCUG 4856 / JCM 11019 / LMG 10263 / NCTC 9343 / Onslow / VPI 2553 / EN-2).